Here is a 597-residue protein sequence, read N- to C-terminus: Integrator complex subunit 11 (597 aa).

Zn(2+) is bound by residues H68, H70, D72, H73, H157, and D178. Positions 68 to 73 (HFHLDH) match the HXHXDH motif motif. E203 is a catalytic residue. H414 is a binding site for Zn(2+). 1D-myo-inositol hexakisphosphate is bound at residue K462.

It belongs to the metallo-beta-lactamase superfamily. RNA-metabolizing metallo-beta-lactamase-like family. INTS11 subfamily. Belongs to the multiprotein complex Integrator, at least composed of IntS1, IntS2, IntS3, IntS4, omd/IntS5, IntS6, defl/IntS7, IntS8, IntS9, IntS10, IntS11, IntS12, asun/IntS13, IntS14 and IntS15. The core complex associates with protein phosphatase 2A subunits mts/PP2A and Pp2A-29B, to form the Integrator-PP2A (INTAC) complex. IntS11 is part of the RNA endonuclease subcomplex, composed of IntS4, IntS9, IntS11 and inositol hexakisphosphate (InsP6). Interacts with Brat1; interaction is required for the assembly of the RNA endonuclease subcomplex and inhibits the endonuclease activity of IntS11 before formation of mature integrator complex. Zn(2+) serves as cofactor. Expressed in neurons and glia of the larval and adult brain.

The protein resides in the nucleus. It is found in the cytoplasm. The protein localises to the cytosol. The RNA endonuclease activity is inhibited by Brat1 that forms hyrogen bond and hydrophobic interactions with the active site. Functionally, RNA endonuclease component of the integrator complex, a multiprotein complex that terminates RNA polymerase II (Pol II) transcription in the promoter-proximal region of genes. The integrator complex provides a quality checkpoint during transcription elongation by driving premature transcription termination of transcripts that are unfavorably configured for transcriptional elongation: the complex terminates transcription by (1) catalyzing dephosphorylation of the C-terminal domain (CTD) of Pol II subunit Polr2A/Rbp1 and Spt5, and (2) degrading the exiting nascent RNA transcript via endonuclease activity. The integrator complex is also involved in the 3'-end processing of the U7 snRNA, and also the spliceosomal snRNAs U1, U2, U4 and U5. Within the integrator complex, IntS11 constitutes the RNA endonuclease subunit that degrades exiting nascent RNA transcripts. The sequence is that of Integrator complex subunit 11 from Drosophila melanogaster (Fruit fly).